The chain runs to 707 residues: Acyl-CoA ligase 891, peroxisomal (707 aa).

259-270 contributes to the ATP binding site; it reads INYTSGTTGPPK. The interval 525–549 is fatty acid-binding; the sequence is DGWFRTGDVCTIDEKGRFIIIDRRK. The Peroxisome targeting signal signature appears at 705-707; sequence AKL.

The protein belongs to the ATP-dependent AMP-binding enzyme family.

Its subcellular location is the peroxisome matrix. It carries out the reaction (4E,8E)-10-(4-hydroxy-6-methoxy-7-methyl-3-oxo-1,3-dihydro-2-benzofuran-5-yl)-4,8-dimethyldeca-4,8-dienoate + ATP + CoA = (4E,8E)-10-(4-hydroxy-6-methoxy-7-methyl-3-oxo-1,3-dihydro-2-benzofuran-5-yl)-4,8-dimethyldeca-4,8-dienoyl-CoA + AMP + diphosphate. Its pathway is secondary metabolite biosynthesis; terpenoid biosynthesis. Its function is as follows. Acyl-CoA ligase involved in the biosynthesis of mycophenolic acid (MPA), the first isolated antibiotic natural product in the world obtained from a culture of Penicillium brevicompactum in 1893. The peroxisomal acyl-CoA ligase 891 converts the intermediate MFDHMP-3C into MFDHMP-3C-CoA which impairs its diffusion from the peroxisome. The first step of the pathway is the synthesis of 5-methylorsellinic acid (5MOA) by the cytosolic polyketide synthase mpaC. 5MOA is then converted to the phthalide compound 5,7-dihydroxy-4,6-dimethylphthalide (DHMP) by the endoplasmic reticulum-bound cytochrome P450 monooxygenase mpaDE. MpaDE first catalyzes hydroxylation of 5-MOA to 4,6-dihydroxy-2-(hydroxymethyl)-3-methylbenzoic acid (DHMB). MpaDE then acts as a lactone synthase that catalyzes the ring closure to convert DHMB into DHMP. The next step is the prenylation of DHMP by the Golgi apparatus-associated prenyltransferase mpaA to yield farnesyl-DHMP (FDHMP). The ER-bound oxygenase mpaB then mediates the oxidative cleavage the C19-C20 double bond in FDHMP to yield FDHMP-3C via a mycophenolic aldehyde intermediate. The O-methyltransferase mpaG catalyzes the methylation of FDHMP-3C to yield MFDHMP-3C. After the cytosolic methylation of FDHMP-3C, MFDHMP-3C enters into peroxisomes probably via free diffusion due to its low molecular weight. Upon a peroxisomal CoA ligation reaction, catalyzed by a beta-oxidation component enzyme acyl-CoA ligase ACL891, MFDHMP-3C-CoA would then be restricted to peroxisomes for the following beta-oxidation pathway steps. The peroxisomal beta-oxidation machinery than converts MFDHMP-3C-CoA into MPA_CoA, via a beta-oxidation chain-shortening process. Finally mpaH acts as a peroxisomal acyl-CoA hydrolase with high substrate specificity toward MPA-CoA to release the final product MPA. This is Acyl-CoA ligase 891, peroxisomal from Penicillium roqueforti (strain FM164).